Consider the following 312-residue polypeptide: MLMKKNASFEDFFLLLGFSNWPHLEVVLFVVILIFYLITLIGNLFIIILSYLDSHLHTPMYFFLSNLSFLDLCYTTSSIPQLLVNLWGPEKTISYAGCTVQLYFVLALGTAECVLLVVMSYDRYAAVCRPLHYTVLMHPRFCRLLAAASWVSGFTTSALHSSFTFWIPLCRHRLVDHFFCEVPALLRLSCVDTQANELTLMVMSSIFVLIPLILILTSYGAIARAVLSMQSTTGLQKVLRTCGAHLMVVSLFFIPVMCMYLQPPSENSQDQGKFIALFYTVVTPSLNPLIYTFRNKDVRGAVKRLMGWEWGM.

Over 1-26 the chain is Extracellular; it reads MLMKKNASFEDFFLLLGFSNWPHLEV. Asparagine 6 carries an N-linked (GlcNAc...) asparagine glycan. Residues 27–50 form a helical membrane-spanning segment; that stretch reads VLFVVILIFYLITLIGNLFIIILS. Topologically, residues 51–58 are cytoplasmic; that stretch reads YLDSHLHT. The chain crosses the membrane as a helical span at residues 59-80; it reads PMYFFLSNLSFLDLCYTTSSIP. At 81–101 the chain is on the extracellular side; the sequence is QLLVNLWGPEKTISYAGCTVQ. Cysteine 98 and cysteine 190 are disulfide-bonded. Residues 102 to 121 form a helical membrane-spanning segment; it reads LYFVLALGTAECVLLVVMSY. The Cytoplasmic portion of the chain corresponds to 122–140; that stretch reads DRYAAVCRPLHYTVLMHPR. A helical transmembrane segment spans residues 141-159; sequence FCRLLAAASWVSGFTTSAL. The Extracellular portion of the chain corresponds to 160-196; the sequence is HSSFTFWIPLCRHRLVDHFFCEVPALLRLSCVDTQAN. The helical transmembrane segment at 197–220 threads the bilayer; it reads ELTLMVMSSIFVLIPLILILTSYG. Residues 221–237 lie on the Cytoplasmic side of the membrane; it reads AIARAVLSMQSTTGLQK. The chain crosses the membrane as a helical span at residues 238 to 260; sequence VLRTCGAHLMVVSLFFIPVMCMY. The Extracellular portion of the chain corresponds to 261–273; it reads LQPPSENSQDQGK. Residues 274–293 traverse the membrane as a helical segment; that stretch reads FIALFYTVVTPSLNPLIYTF. Residues 294-312 lie on the Cytoplasmic side of the membrane; sequence RNKDVRGAVKRLMGWEWGM.

The protein belongs to the G-protein coupled receptor 1 family.

It localises to the cell membrane. Odorant receptor. This is Olfactory receptor 2J1 (OR2J1) from Homo sapiens (Human).